The sequence spans 63 residues: Large ribosomal subunit protein uL29 (63 aa).

This sequence belongs to the universal ribosomal protein uL29 family.

The chain is Large ribosomal subunit protein uL29 from Histophilus somni (strain 129Pt) (Haemophilus somnus).